A 732-amino-acid polypeptide reads, in one-letter code: DNA-directed RNA polymerase subunit beta' (732 aa).

The Zn(2+) site is built by Cys-70, Cys-72, Cys-85, and Cys-88. Mg(2+)-binding residues include Asp-575, Asp-577, and Asp-579.

It belongs to the RNA polymerase beta' chain family. RpoC1 subfamily. In terms of assembly, in plastids the minimal PEP RNA polymerase catalytic core is composed of four subunits: alpha, beta, beta', and beta''. When a (nuclear-encoded) sigma factor is associated with the core the holoenzyme is formed, which can initiate transcription. Requires Mg(2+) as cofactor. Zn(2+) is required as a cofactor.

The protein resides in the plastid. It localises to the chloroplast. The enzyme catalyses RNA(n) + a ribonucleoside 5'-triphosphate = RNA(n+1) + diphosphate. In terms of biological role, DNA-dependent RNA polymerase catalyzes the transcription of DNA into RNA using the four ribonucleoside triphosphates as substrates. The protein is DNA-directed RNA polymerase subunit beta' of Thalassiosira pseudonana (Marine diatom).